We begin with the raw amino-acid sequence, 718 residues long: Methionine--tRNA ligase (718 aa).

The 'HIGH' region motif lies at 27–37 (PYANGQIHIGH). 4 residues coordinate Zn(2+): Cys-158, Cys-161, Cys-171, and Cys-174. Residues 348–352 (KMSKS) carry the 'KMSKS' region motif. ATP is bound at residue Lys-351. Residues 612–718 (DFAKIDLRIA…SGAKPGMRVK (107 aa)) enclose the tRNA-binding domain.

Belongs to the class-I aminoacyl-tRNA synthetase family. MetG type 1 subfamily. Homodimer. Requires Zn(2+) as cofactor.

Its subcellular location is the cytoplasm. The enzyme catalyses tRNA(Met) + L-methionine + ATP = L-methionyl-tRNA(Met) + AMP + diphosphate. Functionally, is required not only for elongation of protein synthesis but also for the initiation of all mRNA translation through initiator tRNA(fMet) aminoacylation. This is Methionine--tRNA ligase from Burkholderia orbicola (strain AU 1054).